Reading from the N-terminus, the 145-residue chain is Small ribosomal subunit protein bS6 (145 aa).

The protein belongs to the bacterial ribosomal protein bS6 family.

Binds together with bS18 to 16S ribosomal RNA. The chain is Small ribosomal subunit protein bS6 from Mycoplasmopsis agalactiae (strain NCTC 10123 / CIP 59.7 / PG2) (Mycoplasma agalactiae).